A 47-amino-acid chain; its full sequence is Light-harvesting protein B800/850/890 alpha-2 chain (47 aa).

At 1–12 (MWRMWKILDYRR) the chain is on the cytoplasmic side. Residues 13–33 (TVVLAHVGMAVLALLIHFILL) form a helical membrane-spanning segment. Residue His-29 coordinates a bacteriochlorophyll. Over 34 to 47 (STESFNWLEGNPYG) the chain is Periplasmic.

It belongs to the antenna complex alpha subunit family. In terms of assembly, the core complex is formed by different alpha and beta chains, binding bacteriochlorophyll molecules, and arranged most probably in tetrameric structures disposed around the reaction center. The non-pigmented gamma chains may constitute additional components.

Its subcellular location is the cell inner membrane. Functionally, antenna complexes are light-harvesting systems, which transfer the excitation energy to the reaction centers. This Halorhodospira halophila (strain DSM 244 / SL1) (Ectothiorhodospira halophila (strain DSM 244 / SL1)) protein is Light-harvesting protein B800/850/890 alpha-2 chain.